The chain runs to 580 residues: XK-related protein 7 (580 aa).

Over residues 1–22 (MAAKSDGAAAVAGPGPEGPAGA) the composition is skewed to low complexity. Positions 1 to 28 (MAAKSDGAAAVAGPGPEGPAGADRGGAG) are disordered. The next 8 helical transmembrane spans lie at 59–79 (WVLC…WLAA), 89–109 (YFGL…LLSF), 260–280 (LLTA…LASY), 303–323 (VLWH…FASV), 326–346 (LYFG…VIQG), 355–375 (WEEI…WFNV), 384–404 (VTLY…FWYS), and 415–435 (LILV…MCVY). The tract at residues 470–516 (TSPPRSLPRTTGAERDGAAVGGERAGTPTPPVFQVRPGLPPTPVARP) is disordered.

It belongs to the XK family.

Its subcellular location is the cell membrane. This chain is XK-related protein 7, found in Rattus norvegicus (Rat).